The following is a 290-amino-acid chain: Phosphoribosylaminoimidazole-succinocarboxamide synthase (290 aa).

This sequence belongs to the SAICAR synthetase family.

It catalyses the reaction 5-amino-1-(5-phospho-D-ribosyl)imidazole-4-carboxylate + L-aspartate + ATP = (2S)-2-[5-amino-1-(5-phospho-beta-D-ribosyl)imidazole-4-carboxamido]succinate + ADP + phosphate + 2 H(+). It functions in the pathway purine metabolism; IMP biosynthesis via de novo pathway; 5-amino-1-(5-phospho-D-ribosyl)imidazole-4-carboxamide from 5-amino-1-(5-phospho-D-ribosyl)imidazole-4-carboxylate: step 1/2. In Haemophilus influenzae (strain ATCC 51907 / DSM 11121 / KW20 / Rd), this protein is Phosphoribosylaminoimidazole-succinocarboxamide synthase (purC).